Reading from the N-terminus, the 491-residue chain is Probable malate:quinone oxidoreductase (491 aa).

The protein belongs to the MQO family. The cofactor is FAD.

It carries out the reaction (S)-malate + a quinone = a quinol + oxaloacetate. The protein operates within carbohydrate metabolism; tricarboxylic acid cycle; oxaloacetate from (S)-malate (quinone route): step 1/1. In Leifsonia xyli subsp. xyli (strain CTCB07), this protein is Probable malate:quinone oxidoreductase.